We begin with the raw amino-acid sequence, 248 residues long: uncharacterized protein (248 aa).

9–33 (IITGASSGIGEATAILLAEKGAKLV) contributes to the NADP(+) binding site. Residue Ser141 coordinates substrate. The Proton acceptor role is filled by Tyr154.

This sequence belongs to the short-chain dehydrogenases/reductases (SDR) family.

This is an uncharacterized protein from Listeria innocua serovar 6a (strain ATCC BAA-680 / CLIP 11262).